A 143-amino-acid chain; its full sequence is Interferon gamma (143 aa).

The residue at position 1 (glutamine 1) is a Pyrrolidone carboxylic acid. 2 N-linked (GlcNAc...) asparagine glycosylation sites follow: asparagine 25 and asparagine 97.

This sequence belongs to the type II (or gamma) interferon family. In terms of assembly, homodimer. Interacts with IFNGR1 (via extracellular domain); this interaction promotes IFNGR1 dimerization.

The protein localises to the secreted. Its function is as follows. Type II interferon produced by immune cells such as T-cells and NK cells that plays crucial roles in antimicrobial, antiviral, and antitumor responses by activating effector immune cells and enhancing antigen presentation. Primarily signals through the JAK-STAT pathway after interaction with its receptor IFNGR1 to affect gene regulation. Upon IFNG binding, IFNGR1 intracellular domain opens out to allow association of downstream signaling components JAK2, JAK1 and STAT1, leading to STAT1 activation, nuclear translocation and transcription of IFNG-regulated genes. Many of the induced genes are transcription factors such as IRF1 that are able to further drive regulation of a next wave of transcription. Plays a role in class I antigen presentation pathway by inducing a replacement of catalytic proteasome subunits with immunoproteasome subunits. In turn, increases the quantity, quality, and repertoire of peptides for class I MHC loading. Increases the efficiency of peptide generation also by inducing the expression of activator PA28 that associates with the proteasome and alters its proteolytic cleavage preference. Up-regulates as well MHC II complexes on the cell surface by promoting expression of several key molecules such as cathepsins B/CTSB, H/CTSH, and L/CTSL. Participates in the regulation of hematopoietic stem cells during development and under homeostatic conditions by affecting their development, quiescence, and differentiation. This Pan troglodytes (Chimpanzee) protein is Interferon gamma (IFNG).